Here is a 160-residue protein sequence, read N- to C-terminus: SUMO-conjugating enzyme SCE1 (160 aa).

The residue at position 2 (A2) is an N-acetylalanine. A UBC core domain is found at 5 to 158; sequence IARGRLAEER…VKLQSKQYPA (154 aa). C94 acts as the Glycyl thioester intermediate in catalysis.

This sequence belongs to the ubiquitin-conjugating enzyme family. In terms of assembly, interacts with SIZ1 (via PHD domain) and MMS21. Interacts with TCP14 and TCP15. Interacts with KIN10.

It functions in the pathway protein modification; protein sumoylation. In terms of biological role, SUMO-conjugating enzyme that accepts the SUMO proteins from the E1 SUMO-activating heterodimer SAE1/SAE2 and catalyzes its covalent attachment to other proteins with the E3 SUMO ligases SIZ1 and MMS21. Associates with SIZ1 for sumoylation of the transcription factor GTE3. The chain is SUMO-conjugating enzyme SCE1 (SCE1) from Arabidopsis thaliana (Mouse-ear cress).